The primary structure comprises 340 residues: Anthranilate phosphoribosyltransferase (340 aa).

5-phospho-alpha-D-ribose 1-diphosphate is bound by residues glycine 82, 85 to 86, threonine 90, 92 to 95, 110 to 118, and alanine 122; these read GD, NISS, and KHGGRSVSS. Glycine 82 contacts anthranilate. Residue serine 94 coordinates Mg(2+). Arginine 168 is a binding site for anthranilate. Residues aspartate 227 and glutamate 228 each contribute to the Mg(2+) site.

This sequence belongs to the anthranilate phosphoribosyltransferase family. Homodimer. The cofactor is Mg(2+).

It catalyses the reaction N-(5-phospho-beta-D-ribosyl)anthranilate + diphosphate = 5-phospho-alpha-D-ribose 1-diphosphate + anthranilate. The protein operates within amino-acid biosynthesis; L-tryptophan biosynthesis; L-tryptophan from chorismate: step 2/5. Functionally, catalyzes the transfer of the phosphoribosyl group of 5-phosphorylribose-1-pyrophosphate (PRPP) to anthranilate to yield N-(5'-phosphoribosyl)-anthranilate (PRA). This chain is Anthranilate phosphoribosyltransferase, found in Dechloromonas aromatica (strain RCB).